We begin with the raw amino-acid sequence, 235 residues long: RNA polymerase sigma factor SigI7 (235 aa).

A Polymerase core binding motif is present at residues 49–62 (DELSIALMAFVETI). The segment at residues 191–210 (VAEIEQSLKIPRKTIERARK) is a DNA-binding region (H-T-H motif).

This sequence belongs to the sigma-70 factor family. SigI subfamily. Interacts with RsgI7.

The protein localises to the cytoplasm. Negatively regulated by the anti-sigma-I factor RsgI7. Functionally, sigma factors are initiation factors that promote the attachment of RNA polymerase to specific initiation sites and are then released. In Acetivibrio thermocellus (strain ATCC 27405 / DSM 1237 / JCM 9322 / NBRC 103400 / NCIMB 10682 / NRRL B-4536 / VPI 7372) (Clostridium thermocellum), this protein is RNA polymerase sigma factor SigI7.